We begin with the raw amino-acid sequence, 276 residues long: Odontogenic ameloblast-associated protein (276 aa).

The first 15 residues, 1–15 (MRTLILLGILGATMS), serve as a signal peptide directing secretion. Residues Thr101, Thr113, and Thr117 are each glycosylated (O-linked (GalNAc...) threonine). Residues 125–127 (MPS) form an interaction with ARHGEF5 region. Ser246 carries O-linked (GalNAc...) serine glycosylation. Thr247, Thr248, and Thr252 each carry an O-linked (GalNAc...) threonine glycan. Ser253 is a glycosylation site (O-linked (GalNAc...) serine). Thr254, Thr258, Thr260, and Thr270 each carry an O-linked (GalNAc...) threonine glycan. A glycan (O-linked (GalNAc...) serine) is linked at Ser272.

It belongs to the ODAM family. Interacts (via C-terminus) with ARHGEF5. Post-translationally, O-glycosylated.

It localises to the secreted. The protein localises to the cytoplasm. Its subcellular location is the nucleus. Its function is as follows. Tooth-associated epithelia protein that probably plays a role in odontogenesis, the complex process that results in the initiation and generation of the tooth. May be incorporated in the enamel matrix at the end of mineralization process. Involved in the induction of RHOA activity via interaction with ARHGEF and expression of downstream factors such as ROCK. Plays a role in attachment of the junctional epithelium to the tooth surface. The polypeptide is Odontogenic ameloblast-associated protein (ODAM) (Sus scrofa (Pig)).